Consider the following 214-residue polypeptide: Probable nicotinate-nucleotide adenylyltransferase (214 aa).

It belongs to the NadD family.

The enzyme catalyses nicotinate beta-D-ribonucleotide + ATP + H(+) = deamido-NAD(+) + diphosphate. It participates in cofactor biosynthesis; NAD(+) biosynthesis; deamido-NAD(+) from nicotinate D-ribonucleotide: step 1/1. Catalyzes the reversible adenylation of nicotinate mononucleotide (NaMN) to nicotinic acid adenine dinucleotide (NaAD). The protein is Probable nicotinate-nucleotide adenylyltransferase of Rhodopirellula baltica (strain DSM 10527 / NCIMB 13988 / SH1).